Consider the following 78-residue polypeptide: Sec-independent protein translocase protein TatA (78 aa).

Residues 4-21 (SFQHILILLVVVLLLFGR) form a helical membrane-spanning segment. The tract at residues 49-78 (TAKSDSIKTIDNTGKPTNVQANPQRQDSTV) is disordered. Residues 57-78 (TIDNTGKPTNVQANPQRQDSTV) show a composition bias toward polar residues.

It belongs to the TatA/E family. As to quaternary structure, the Tat system comprises two distinct complexes: a TatABC complex, containing multiple copies of TatA, TatB and TatC subunits, and a separate TatA complex, containing only TatA subunits. Substrates initially bind to the TatABC complex, which probably triggers association of the separate TatA complex to form the active translocon.

It is found in the cell inner membrane. In terms of biological role, part of the twin-arginine translocation (Tat) system that transports large folded proteins containing a characteristic twin-arginine motif in their signal peptide across membranes. TatA could form the protein-conducting channel of the Tat system. In Afipia carboxidovorans (strain ATCC 49405 / DSM 1227 / KCTC 32145 / OM5) (Oligotropha carboxidovorans), this protein is Sec-independent protein translocase protein TatA.